Consider the following 587-residue polypeptide: Proteasome-associated ATPase (587 aa).

Residues 9-94 (ARKAQHDAEI…KEEVDRLAQP (86 aa)) adopt a coiled-coil conformation. 276–281 (GCGKTL) provides a ligand contact to ATP. The tract at residues 586–587 (YL) is docks into pockets in the proteasome alpha-ring.

It belongs to the AAA ATPase family. In terms of assembly, homohexamer. Assembles into a hexameric ring structure that caps the 20S proteasome core. Strongly interacts with the prokaryotic ubiquitin-like protein Pup through a hydrophobic interface; the interacting region of ARC lies in its N-terminal coiled-coil domain. There is one Pup binding site per ARC hexamer ring. Upon ATP-binding, the C-terminus of ARC interacts with the alpha-rings of the proteasome core, possibly by binding to the intersubunit pockets.

It participates in protein degradation; proteasomal Pup-dependent pathway. Functionally, ATPase which is responsible for recognizing, binding, unfolding and translocation of pupylated proteins into the bacterial 20S proteasome core particle. May be essential for opening the gate of the 20S proteasome via an interaction with its C-terminus, thereby allowing substrate entry and access to the site of proteolysis. Thus, the C-termini of the proteasomal ATPase may function like a 'key in a lock' to induce gate opening and therefore regulate proteolysis. The sequence is that of Proteasome-associated ATPase from Thermomonospora curvata (strain ATCC 19995 / DSM 43183 / JCM 3096 / KCTC 9072 / NBRC 15933 / NCIMB 10081 / Henssen B9).